A 139-amino-acid polypeptide reads, in one-letter code: Putative pre-16S rRNA nuclease (139 aa).

The protein belongs to the YqgF nuclease family.

The protein localises to the cytoplasm. Functionally, could be a nuclease involved in processing of the 5'-end of pre-16S rRNA. This is Putative pre-16S rRNA nuclease from Thermoanaerobacter pseudethanolicus (strain ATCC 33223 / 39E) (Clostridium thermohydrosulfuricum).